A 230-amino-acid chain; its full sequence is Phosphoribosylformylglycinamidine synthase subunit PurQ (230 aa).

The Glutamine amidotransferase type-1 domain maps to 2–230; that stretch reads KIAVTKFLGT…KGMIDYAKRI (229 aa). C85 functions as the Nucleophile in the catalytic mechanism. Catalysis depends on residues H202 and E204.

Part of the FGAM synthase complex composed of 1 PurL, 1 PurQ and 2 PurS subunits.

The protein localises to the cytoplasm. It carries out the reaction N(2)-formyl-N(1)-(5-phospho-beta-D-ribosyl)glycinamide + L-glutamine + ATP + H2O = 2-formamido-N(1)-(5-O-phospho-beta-D-ribosyl)acetamidine + L-glutamate + ADP + phosphate + H(+). The catalysed reaction is L-glutamine + H2O = L-glutamate + NH4(+). Its pathway is purine metabolism; IMP biosynthesis via de novo pathway; 5-amino-1-(5-phospho-D-ribosyl)imidazole from N(2)-formyl-N(1)-(5-phospho-D-ribosyl)glycinamide: step 1/2. Its function is as follows. Part of the phosphoribosylformylglycinamidine synthase complex involved in the purines biosynthetic pathway. Catalyzes the ATP-dependent conversion of formylglycinamide ribonucleotide (FGAR) and glutamine to yield formylglycinamidine ribonucleotide (FGAM) and glutamate. The FGAM synthase complex is composed of three subunits. PurQ produces an ammonia molecule by converting glutamine to glutamate. PurL transfers the ammonia molecule to FGAR to form FGAM in an ATP-dependent manner. PurS interacts with PurQ and PurL and is thought to assist in the transfer of the ammonia molecule from PurQ to PurL. This Methanocaldococcus jannaschii (strain ATCC 43067 / DSM 2661 / JAL-1 / JCM 10045 / NBRC 100440) (Methanococcus jannaschii) protein is Phosphoribosylformylglycinamidine synthase subunit PurQ.